The chain runs to 503 residues: REST corepressor 2 (503 aa).

Residues 1-62 (MPSVMEKSHG…IPECKPDNTS (62 aa)) form a disordered region. One can recognise an ELM2 domain in the interval 41-126 (SMIRVGSDYQ…RSLADLANFT (86 aa)). The region spanning 127-178 (PFPEEWSVEDKVLFEQAFSFHGKSFQRIQQMLPEKLIPSLVKYYYSWKKTRS) is the SANT 1 domain. Coiled-coil stretches lie at residues 182 to 206 (VMDR…DQIK) and 286 to 314 (QLET…SLEG). The 52-residue stretch at 327–378 (KLNARWTTDEQLLAVQAVRKYGKDFQAISEVLGNKTPSQVKTFFISYRRRFN) folds into the SANT 2 domain. Residues 385 to 503 (EWEAEQEPSP…VGSHAESTFS (119 aa)) are disordered. The span at 399-412 (TDMSNKTSGSSQTP) shows a compositional bias: polar residues. A compositionally biased stretch (low complexity) spans 423 to 442 (SVSSSSQPAPPAAAAAASLS).

This sequence belongs to the CoREST family.

The protein resides in the nucleus. In terms of biological role, may act as a component of a corepressor complex that represses transcription. In Xenopus laevis (African clawed frog), this protein is REST corepressor 2 (rcor2).